Here is a 264-residue protein sequence, read N- to C-terminus: Thiazole synthase (264 aa).

The Schiff-base intermediate with DXP role is filled by Lys-106. 1-deoxy-D-xylulose 5-phosphate is bound by residues Gly-167, 193 to 194, and 215 to 216; these read AG and NT.

It belongs to the ThiG family. In terms of assembly, homotetramer. Forms heterodimers with either ThiH or ThiS.

It is found in the cytoplasm. It catalyses the reaction [ThiS sulfur-carrier protein]-C-terminal-Gly-aminoethanethioate + 2-iminoacetate + 1-deoxy-D-xylulose 5-phosphate = [ThiS sulfur-carrier protein]-C-terminal Gly-Gly + 2-[(2R,5Z)-2-carboxy-4-methylthiazol-5(2H)-ylidene]ethyl phosphate + 2 H2O + H(+). The protein operates within cofactor biosynthesis; thiamine diphosphate biosynthesis. Functionally, catalyzes the rearrangement of 1-deoxy-D-xylulose 5-phosphate (DXP) to produce the thiazole phosphate moiety of thiamine. Sulfur is provided by the thiocarboxylate moiety of the carrier protein ThiS. In vitro, sulfur can be provided by H(2)S. The protein is Thiazole synthase of Stenotrophomonas maltophilia (strain R551-3).